A 508-amino-acid chain; its full sequence is Maturase K (508 aa).

Belongs to the intron maturase 2 family. MatK subfamily.

It is found in the plastid. The protein resides in the chloroplast. Its function is as follows. Usually encoded in the trnK tRNA gene intron. Probably assists in splicing its own and other chloroplast group II introns. This chain is Maturase K, found in Coronilla varia (Crown vetch).